Here is a 189-residue protein sequence, read N- to C-terminus: MSWFGFFDPDFDDFFGRPRKYATEVPPNFNPRKIAQGDNGKGQQVSRYGAGAGHPHRALARRDDFFDDFWKNFSSGKYFVGFDDNVKTTEESDKYVVSYDQENLSPDEVNVDFDKQENELIITVTQETEKDGTKKSSTFHSNLKFEKPVNFDDISAEIGEQGVQVTLPKVHADHEKIVNIPISKAAAKK.

Positions 26-53 (PPNFNPRKIAQGDNGKGQQVSRYGAGAG) are disordered. A sHSP domain is found at 77–183 (KYFVGFDDNV…HEKIVNIPIS (107 aa)).

This sequence belongs to the small heat shock protein (HSP20) family.

Its function is as follows. Heat shock protein required for pathogenicity. Mediates thermotolerance and adaptation to oxidative stress and ethanol-induced stress. Required for invasive growth and filament formation under various filament inducing conditions. Plays a role in the capacity of damaging human-derived endothelial and oral epithelial cells during infection. Potentiates resistance to antifungal drugs, as well as resistance to killing by human neutrophils. Plays a major role in trehalose homeostasis in response to elevated temperatures. Regulates CEK1 activation by phosphorylation in response to elevated temperatures. This chain is Small heat shock protein 21 (HSP21), found in Candida albicans (strain SC5314 / ATCC MYA-2876) (Yeast).